The chain runs to 555 residues: Protein FAM234A (555 aa).

Residues 1-22 show a composition bias toward basic and acidic residues; it reads MMDNKDLEAEIHPLKNEDKKSQ. The disordered stretch occupies residues 1–40; that stretch reads MMDNKDLEAEIHPLKNEDKKSQENPGNLPRNEDNLKSKPV. Over 1 to 49 the chain is Cytoplasmic; sequence MMDNKDLEAEIHPLKNEDKKSQENPGNLPRNEDNLKSKPVPSRLSRCRT. At serine 21 the chain carries Phosphoserine. A helical; Signal-anchor for type II membrane protein transmembrane segment spans residues 50 to 70; it reads VAFFLSLFTCLFVVFVLSFII. Residues 71–555 are Extracellular-facing; the sequence is PCPDRPSSQG…FSRLRYRSEM (485 aa). N-linked (GlcNAc...) asparagine glycans are attached at residues asparagine 116, asparagine 120, asparagine 317, asparagine 392, and asparagine 476.

Belongs to the FAM234 family.

The protein resides in the membrane. This chain is Protein FAM234A, found in Mus musculus (Mouse).